The following is a 315-amino-acid chain: Uracil-DNA glycosylase (315 aa).

The span at 35 to 80 (AAAAAPAGAGAGASKPARPPAAARPAKGTPAASAATTATGADASAP) shows a compositional bias: low complexity. Positions 35-88 (AAAAAPAGAGAGASKPARPPAAARPAKGTPAASAATTATGADASAPAPDPGAPT) are disordered. The active-site Proton acceptor is the Asp158.

The protein belongs to the uracil-DNA glycosylase (UDG) superfamily. UNG family.

Its subcellular location is the host nucleus. The catalysed reaction is Hydrolyzes single-stranded DNA or mismatched double-stranded DNA and polynucleotides, releasing free uracil.. Its function is as follows. Excises uracil residues from the DNA which can arise as a result of misincorporation of dUMP residues by DNA polymerase or deamination of cytosines. Therefore may reduce deleterious uracil incorporation into the viral genome, particularly in terminally differentiated cells which lack DNA repair enzymes. The polypeptide is Uracil-DNA glycosylase (UL2) (Suid herpesvirus 1 (strain Indiana-Funkhauser / Becker) (SuHV-1)).